The sequence spans 218 residues: Probable transaldolase (218 aa).

K83 functions as the Schiff-base intermediate with substrate in the catalytic mechanism.

The protein belongs to the transaldolase family. Type 3B subfamily.

It localises to the cytoplasm. The enzyme catalyses D-sedoheptulose 7-phosphate + D-glyceraldehyde 3-phosphate = D-erythrose 4-phosphate + beta-D-fructose 6-phosphate. It functions in the pathway carbohydrate degradation; pentose phosphate pathway; D-glyceraldehyde 3-phosphate and beta-D-fructose 6-phosphate from D-ribose 5-phosphate and D-xylulose 5-phosphate (non-oxidative stage): step 2/3. In terms of biological role, transaldolase is important for the balance of metabolites in the pentose-phosphate pathway. In Thermotoga sp. (strain RQ2), this protein is Probable transaldolase.